The sequence spans 334 residues: Spermidine synthase 1 (334 aa).

The segment at 1-37 (MAAPENTLHSTDSPLKRQREDEVNGVSDTLSKEPQPN) is disordered. A compositionally biased stretch (polar residues) spans 26–37 (VSDTLSKEPQPN). A PABS domain is found at 44–281 (PGWFSEISPM…GMIGFMLCST (238 aa)). Q75 lines the S-adenosyl 3-(methylsulfanyl)propylamine pocket. Y105 contributes to the putrescine binding site. S-adenosyl 3-(methylsulfanyl)propylamine-binding positions include Q106, D130, E150, 181 to 182 (DG), and D200. Residue D200 is the Proton acceptor of the active site. Putrescine contacts are provided by residues 200–203 (DSSD) and Y269.

It belongs to the spermidine/spermine synthase family.

It catalyses the reaction S-adenosyl 3-(methylsulfanyl)propylamine + putrescine = S-methyl-5'-thioadenosine + spermidine + H(+). Its pathway is amine and polyamine biosynthesis; spermidine biosynthesis; spermidine from putrescine: step 1/1. This is Spermidine synthase 1 (SPDSYN1) from Pisum sativum (Garden pea).